A 222-amino-acid chain; its full sequence is Translation initiation factor 6 (222 aa).

The protein belongs to the eIF-6 family.

In terms of biological role, binds to the 50S ribosomal subunit and prevents its association with the 30S ribosomal subunit to form the 70S initiation complex. The protein is Translation initiation factor 6 of Methanothermobacter thermautotrophicus (strain ATCC 29096 / DSM 1053 / JCM 10044 / NBRC 100330 / Delta H) (Methanobacterium thermoautotrophicum).